The sequence spans 320 residues: Probable cell division protein WhiA (320 aa).

Positions 276 to 310 (TLKELGELVSGGKISKSGINHRLRKIDEIAERLRA) form a DNA-binding region, H-T-H motif.

This sequence belongs to the WhiA family.

Involved in cell division and chromosome segregation. The chain is Probable cell division protein WhiA from Geobacillus sp. (strain WCH70).